An 890-amino-acid chain; its full sequence is Translation initiation factor IF-2 (890 aa).

Residues 45-304 (LIDHLNQKNS…LQQGFQKPAQ (260 aa)) are disordered. Over residues 67–81 (STLNIPGTGGKSKSV) the composition is skewed to polar residues. The span at 92–217 (VKRDPQEAER…RMAEENKWTD (126 aa)) shows a compositional bias: basic and acidic residues. Basic residues predominate over residues 252–266 (GRGRNAKAARPKKGN). Over residues 267–280 (KHAESKADREEARA) the composition is skewed to basic and acidic residues. One can recognise a tr-type G domain in the interval 389–558 (PRAPVVTIMG…LLQAEVLELK (170 aa)). A G1 region spans residues 398 to 405 (GHVDHGKT). 398–405 (GHVDHGKT) is a GTP binding site. The G2 stretch occupies residues 423–427 (GITQH). The interval 444 to 447 (DTPG) is G3. Residues 444–448 (DTPGH) and 498–501 (NKID) contribute to the GTP site. The interval 498–501 (NKID) is G4. The interval 534-536 (SAK) is G5. Position 808 is an N6-acetyllysine (Lys808).

Belongs to the TRAFAC class translation factor GTPase superfamily. Classic translation factor GTPase family. IF-2 subfamily.

The protein localises to the cytoplasm. One of the essential components for the initiation of protein synthesis. Protects formylmethionyl-tRNA from spontaneous hydrolysis and promotes its binding to the 30S ribosomal subunits. Also involved in the hydrolysis of GTP during the formation of the 70S ribosomal complex. The sequence is that of Translation initiation factor IF-2 from Escherichia coli (strain 55989 / EAEC).